A 129-amino-acid polypeptide reads, in one-letter code: Vacuolar transporter chaperone complex subunit 1 (129 aa).

Residue Ser2 is modified to N-acetylserine. Topologically, residues 2 to 32 (SSAPLLQRTPGKKIALPTRVEPKVFFANERT) are cytoplasmic. A helical membrane pass occupies residues 33–53 (FLSWLNFTVMLGGLGVGLLNF). Residues 54–59 (GDKIGR) lie on the Vacuolar side of the membrane. A helical membrane pass occupies residues 60-80 (VSAGLFTFVAMGTMIYALVTY). Residues 81 to 98 (HWRAAAIRRRGSGPYDDR) are Cytoplasmic-facing. The helical transmembrane segment at 99-119 (LGPTLLCFFLLVAVIINFILR) threads the bilayer. Residues 120-129 (LKYNDANTKL) are Vacuolar-facing.

This sequence belongs to the VTC1 family. The VTC core complex is an integral membrane heterooligomer composed of the catalytic subunit VTC4 and the accessory subunits VTC1, VTC2 and VTC3. The complex exists in 2 different sub-complexes: VTC1-VTC2-VCT4 and VCT1-VTC3-VTC4. The VCT1-VTC3-VTC4 subcomplex is mostly found on the vacuolar membrane. The VTC1-VTC2-VCT4 subcomplex is observed in the cell periphery, probably ER and nuclear envelope, but localizes to the vacuole under phosphate starvation. Each subunit contains 3 transmembrane helices. VTC1 is a small membrane protein without hydrophilic domain. VTC2, VTC3 and VTC4 are related and have 2 hydrophilic domains that face the cytosol, an N-terminal SPX domain and the central core domain. The central core in VTC4 is the catalytic domain, with the essential catalytic lysine replaced by isoleucine and leucine in VTC2 and VTC3, respectively. The core complex associates with the accessory subunit VTC5. The complex interacts with the v-SNARE NYV1 and with the V(0) subunit of V-ATPase VPH1.

It localises to the vacuole membrane. The protein resides in the cytoplasm. Its subcellular location is the cell cortex. It is found in the endoplasmic reticulum membrane. The protein localises to the cytoplasmic vesicle. It localises to the autophagosome membrane. Functionally, accessory subunit of the vacuolar transporter chaperone (VTC) complex. The VTC complex acts as a vacuolar polyphosphate polymerase that catalyzes the synthesis of inorganic polyphosphate (polyP) via transfer of phosphate from ATP to a growing polyP chain, releasing ADP. VTC exposes its catalytic domain VTC4 to the cytosol, where the growing polyP chain winds through a tunnel-shaped pocket, integrating cytoplasmic polymer synthesis with polyP membrane translocation. The VTC complex carries 9 vacuolar transmembrane domains, which are likely to constitute the translocation channel into the organelle lumen. PolyP synthesis is tightly coupled to its transport into the vacuole lumen, in order to avoid otherwise toxic intermediates in the cytosol, and it depends on the proton gradient across the membrane, formed by V-ATPase. VTC1 contributes only 3 transmembrane domains to the complex. The VTC complex also plays a role in vacuolar membrane fusion. Required for SEC18/NSF activity in SNARE priming, membrane binding of LMA1 and V(0) trans-complex formation. This Saccharomyces cerevisiae (strain ATCC 204508 / S288c) (Baker's yeast) protein is Vacuolar transporter chaperone complex subunit 1.